Here is a 797-residue protein sequence, read N- to C-terminus: Phenylalanine--tRNA ligase beta subunit (797 aa).

Residues 40–154 (MEGLSKLVVG…ADAKVGDSIF (115 aa)) enclose the tRNA-binding domain. The B5 domain occupies 407-482 (PILPKVSITL…RIYGYDNLPS (76 aa)). Positions 460, 466, 469, and 470 each coordinate Mg(2+). In terms of domain architecture, FDX-ACB spans 704–797 (PKVQAVHRDI…LVEKLDIEIR (94 aa)).

The protein belongs to the phenylalanyl-tRNA synthetase beta subunit family. Type 1 subfamily. Tetramer of two alpha and two beta subunits. Mg(2+) serves as cofactor.

The protein localises to the cytoplasm. It carries out the reaction tRNA(Phe) + L-phenylalanine + ATP = L-phenylalanyl-tRNA(Phe) + AMP + diphosphate + H(+). The sequence is that of Phenylalanine--tRNA ligase beta subunit from Lactococcus lactis subsp. lactis (strain IL1403) (Streptococcus lactis).